Reading from the N-terminus, the 254-residue chain is Triosephosphate isomerase (254 aa).

10 to 12 (NWK) contacts substrate. His-99 acts as the Electrophile in catalysis. Glu-169 (proton acceptor) is an active-site residue. Substrate contacts are provided by residues Gly-175, Ser-215, and 236-237 (GG).

Belongs to the triosephosphate isomerase family. As to quaternary structure, homodimer.

The protein localises to the cytoplasm. The enzyme catalyses D-glyceraldehyde 3-phosphate = dihydroxyacetone phosphate. Its pathway is carbohydrate biosynthesis; gluconeogenesis. It participates in carbohydrate degradation; glycolysis; D-glyceraldehyde 3-phosphate from glycerone phosphate: step 1/1. In terms of biological role, involved in the gluconeogenesis. Catalyzes stereospecifically the conversion of dihydroxyacetone phosphate (DHAP) to D-glyceraldehyde-3-phosphate (G3P). The chain is Triosephosphate isomerase from Chlamydia abortus (strain DSM 27085 / S26/3) (Chlamydophila abortus).